The following is a 483-amino-acid chain: Nuc-1 negative regulatory protein preg (483 aa).

Composition is skewed to low complexity over residues 1–32 (MLTR…PRPS), 60–80 (SSRR…PISI), and 176–200 (ASAL…AVAV). Disordered regions lie at residues 1–112 (MLTR…SRPQ), 164–234 (NTVG…SQGD), and 434–483 (CPEP…RHAT). Residues 435–473 (PEPEEADDEDEDEELDESDAIGDDDDDIDGEGGEREEET) are compositionally biased toward acidic residues.

It belongs to the cyclin family.

Functionally, negative regulator, together with pgov, of the transcriptional activator nuc-1, which controls the expression of phosphorous acquisition enzymes. The chain is Nuc-1 negative regulatory protein preg (preg) from Neurospora crassa (strain ATCC 24698 / 74-OR23-1A / CBS 708.71 / DSM 1257 / FGSC 987).